Consider the following 112-residue polypeptide: UPF0102 protein Cla_1413 (112 aa).

Belongs to the UPF0102 family.

This is UPF0102 protein Cla_1413 from Campylobacter lari (strain RM2100 / D67 / ATCC BAA-1060).